The sequence spans 364 residues: tRNA N6-adenosine threonylcarbamoyltransferase (364 aa).

Residues histidine 115 and histidine 119 each coordinate Fe cation. Substrate is bound by residues 137 to 141 (LVSGG), aspartate 170, glycine 183, and asparagine 288. Residue aspartate 316 participates in Fe cation binding. The segment at 341 to 364 (PRSRWPLDEKSAPLIGTGRRGTKA) is disordered.

Belongs to the KAE1 / TsaD family. Fe(2+) serves as cofactor.

The protein resides in the cytoplasm. The catalysed reaction is L-threonylcarbamoyladenylate + adenosine(37) in tRNA = N(6)-L-threonylcarbamoyladenosine(37) in tRNA + AMP + H(+). Its function is as follows. Required for the formation of a threonylcarbamoyl group on adenosine at position 37 (t(6)A37) in tRNAs that read codons beginning with adenine. Is involved in the transfer of the threonylcarbamoyl moiety of threonylcarbamoyl-AMP (TC-AMP) to the N6 group of A37, together with TsaE and TsaB. TsaD likely plays a direct catalytic role in this reaction. The chain is tRNA N6-adenosine threonylcarbamoyltransferase from Bartonella henselae (strain ATCC 49882 / DSM 28221 / CCUG 30454 / Houston 1) (Rochalimaea henselae).